Reading from the N-terminus, the 569-residue chain is Alpha-keto-acid decarboxylase (569 aa).

E57 serves as a coordination point for thiamine diphosphate. The segment at T392–I474 is thiamine pyrophosphate binding. D442, N469, and G471 together coordinate Mg(2+).

The protein belongs to the TPP enzyme family. A metal cation is required as a cofactor. Thiamine diphosphate serves as cofactor.

In terms of biological role, decarboxylates branched-chain and aromatic alpha-keto acids to aldehydes. This Mycobacterium leprae (strain TN) protein is Alpha-keto-acid decarboxylase (kdc).